We begin with the raw amino-acid sequence, 22 residues long: Fuctinin-2 (22 aa).

Positions Glu-1–Val-22 are disordered. Positions Lys-7–Val-22 are enriched in basic and acidic residues.

The protein to human SET/PHAPII protein. As to quaternary structure, oligomer.

It is found in the cytoplasm. Has a role in the physiological regulation of fucosylation processes. The protein is Fuctinin-2 of Rattus norvegicus (Rat).